We begin with the raw amino-acid sequence, 380 residues long: Cytochrome b (380 aa).

4 helical membrane-spanning segments follow: residues 34 to 54 (FGSL…LLAM), 78 to 99 (WLIR…YFHI), 114 to 134 (WNTG…GYVL), and 179 to 199 (FFAL…IHLT). Positions 84 and 98 each coordinate heme b. Heme b-binding residues include His-183 and His-197. Residue His-202 participates in a ubiquinone binding. A run of 4 helical transmembrane segments spans residues 227–247 (LKDI…ALFS), 289–309 (LGGV…PFLH), 321–341 (ISQL…WVGS), and 348–368 (FIII…VLFP).

Belongs to the cytochrome b family. The cytochrome bc1 complex contains 11 subunits: 3 respiratory subunits (MT-CYB, CYC1 and UQCRFS1), 2 core proteins (UQCRC1 and UQCRC2) and 6 low-molecular weight proteins (UQCRH/QCR6, UQCRB/QCR7, UQCRQ/QCR8, UQCR10/QCR9, UQCR11/QCR10 and a cleavage product of UQCRFS1). This cytochrome bc1 complex then forms a dimer. Heme b is required as a cofactor.

It is found in the mitochondrion inner membrane. Component of the ubiquinol-cytochrome c reductase complex (complex III or cytochrome b-c1 complex) that is part of the mitochondrial respiratory chain. The b-c1 complex mediates electron transfer from ubiquinol to cytochrome c. Contributes to the generation of a proton gradient across the mitochondrial membrane that is then used for ATP synthesis. This chain is Cytochrome b (MT-CYB), found in Pachyptila turtur (Fairy prion).